A 636-amino-acid chain; its full sequence is 1-deoxy-D-xylulose-5-phosphate synthase (636 aa).

Residues H75 and 116–118 (AHS) each bind thiamine diphosphate. D147 serves as a coordination point for Mg(2+). Residues 148-149 (GA), N177, Y288, and E370 each bind thiamine diphosphate. N177 contributes to the Mg(2+) binding site.

It belongs to the transketolase family. DXPS subfamily. As to quaternary structure, homodimer. It depends on Mg(2+) as a cofactor. Thiamine diphosphate is required as a cofactor.

It catalyses the reaction D-glyceraldehyde 3-phosphate + pyruvate + H(+) = 1-deoxy-D-xylulose 5-phosphate + CO2. It functions in the pathway metabolic intermediate biosynthesis; 1-deoxy-D-xylulose 5-phosphate biosynthesis; 1-deoxy-D-xylulose 5-phosphate from D-glyceraldehyde 3-phosphate and pyruvate: step 1/1. Catalyzes the acyloin condensation reaction between C atoms 2 and 3 of pyruvate and glyceraldehyde 3-phosphate to yield 1-deoxy-D-xylulose-5-phosphate (DXP). The sequence is that of 1-deoxy-D-xylulose-5-phosphate synthase from Ralstonia pickettii (strain 12J).